The chain runs to 327 residues: uncharacterized protein (327 aa).

At 1–19 (MSIAQDRGIVFKLLSIYRA) the chain is on the cytoplasmic side. The chain crosses the membrane as a helical span at residues 20-40 (AAGIFMALAQLIVIFFGYCDF). The Extracellular portion of the chain corresponds to 41-51 (KIKGYRIASYN). The chain crosses the membrane as a helical span at residues 52–72 (APTFASSFIILAVCLLLVVVL). At 73-104 (ENPEVKVTNSENSLFSALKQFFRVERKKLISC) the chain is on the cytoplasmic side. The helical transmembrane segment at 105–125 (LILLWSMFLSSFIMSEVVYFM) threads the bilayer. Over 126 to 141 (PLFLTLHVNWDTKFQG) the chain is Extracellular. A helical membrane pass occupies residues 142-162 (IAFMVASILGVTGSYFAPKLI). Residues 163 to 199 (NVGCSCGRAKDGGLEESDTTGSETVEVKKKDSLYSGQ) lie on the Cytoplasmic side of the membrane. Residues 200–220 (VFLSIFALFVSLLGQAFMIGA) traverse the membrane as a helical segment. Topologically, residues 221–235 (SEALKHKSMPPTNSG) are extracellular. Residues 236-256 (IFFSAGMSITLLGYNFLASSI) traverse the membrane as a helical segment. Residues 257 to 275 (PALFSMYIDPKLKVQLMPS) are Cytoplasmic-facing. The helical transmembrane segment at 276 to 296 (IGAISGIGKLVAPIVLAALYG) threads the bilayer. Residues 297 to 300 (TRLG) are Extracellular-facing. A helical transmembrane segment spans residues 301–321 (LSIAVGFGMILVAVSIPPLIW). Residues 322–327 (LRKKRC) lie on the Cytoplasmic side of the membrane.

The protein localises to the membrane. This is an uncharacterized protein from Saccharomyces cerevisiae (strain ATCC 204508 / S288c) (Baker's yeast).